The chain runs to 88 residues: Large ribosomal subunit protein bL27 (88 aa).

Residues 1–23 (MAHKKGTGSTRNGRDSNSKRLGV) form a disordered region.

The protein belongs to the bacterial ribosomal protein bL27 family.

The protein is Large ribosomal subunit protein bL27 of Synechococcus sp. (strain CC9902).